Consider the following 1194-residue polypeptide: IQ motif and SEC7 domain-containing protein 3 (1194 aa).

A coiled-coil region spans residues 20 to 56; that stretch reads AIVQNQQSLIHTQRQRIDELERRLDELSAENRSLWEH. 2 disordered regions span residues 62–149 and 229–272; these read AQPP…EKER and GRPS…QQPA. A compositionally biased stretch (pro residues) spans 63 to 78; that stretch reads QPPPGLVPPPSAPLPA. The span at 79–92 shows a compositional bias: low complexity; sequence PAATAPAATAAQEP. Over residues 122 to 133 the composition is skewed to polar residues; it reads PSSRVQTPQSPH. Serine 255 carries the phosphoserine modification. An IQ domain is found at 311–340; it reads SRRAACTIQTAFRQYQLSKNFEKIRNSLLE. 2 disordered regions span residues 439–471 and 515–610; these read SAGQ…QGHS and PAAV…KSAK. Low complexity-rich tracts occupy residues 561-572 and 600-610; these read VAEAVVEEAVAT and SSSSASTKSAK. Residues 646–839 enclose the SEC7 domain; the sequence is TLSTDTLRKR…VGIYERIQQK (194 aa). The PH domain occupies 852–985; sequence TKVEKSIVGM…LKESIAEVTE (134 aa). Disordered regions lie at residues 1002 to 1099 and 1137 to 1175; these read KTLS…PTPP and SSDS…HQFC. The span at 1024–1035 shows a compositional bias: basic and acidic residues; the sequence is AKREAMAGEKAT. Polar residues predominate over residues 1036 to 1052; that stretch reads ESSGEVSIHNRLQTFQH. 2 stretches are compositionally biased toward pro residues: residues 1064 to 1099 and 1159 to 1169; these read APSP…PTPP and PPLPPPPPPYN.

The protein belongs to the BRAG family. As to quaternary structure, interacts with DLG1 and DLG4. Interacts with GPHN. Expressed in brain. Localized to dendrites, as well as somas of neuronal cells.

The protein resides in the cytoplasm. The protein localises to the postsynaptic density. In terms of biological role, acts as a guanine nucleotide exchange factor (GEF) for ARF1. The polypeptide is IQ motif and SEC7 domain-containing protein 3 (Iqsec3) (Rattus norvegicus (Rat)).